The chain runs to 62 residues: Large ribosomal subunit protein eL37 (62 aa).

Residues Cys-20, Cys-23, Cys-35, and Cys-38 each contribute to the Zn(2+) site. The C4-type zinc finger occupies Cys-20–Cys-38.

It belongs to the eukaryotic ribosomal protein eL37 family. The cofactor is Zn(2+).

Binds to the 23S rRNA. This chain is Large ribosomal subunit protein eL37 (rpl37e), found in Aeropyrum pernix (strain ATCC 700893 / DSM 11879 / JCM 9820 / NBRC 100138 / K1).